A 230-amino-acid chain; its full sequence is UPF0500 protein C1orf216 homolog (230 aa).

Residues methionine 1–serine 103 form a disordered region. A compositionally biased stretch (polar residues) spans arginine 60 to glutamine 73. A compositionally biased stretch (low complexity) spans proline 85 to alanine 94.

This sequence belongs to the UPF0500 family.

The chain is UPF0500 protein C1orf216 homolog from Mus musculus (Mouse).